A 92-amino-acid chain; its full sequence is YcgL domain-containing protein Shewmr7_2249 (92 aa).

Positions 1–85 (MLCAVYKSSR…PQVNLLAEHR (85 aa)) constitute a YcgL domain.

The protein is YcgL domain-containing protein Shewmr7_2249 of Shewanella sp. (strain MR-7).